The sequence spans 328 residues: Galactinol synthase 10 (328 aa).

The active site involves Lys-106. Mn(2+) is bound by residues Asp-122, Asp-124, and His-248.

The protein belongs to the glycosyltransferase 8 family. Galactosyltransferase subfamily. A divalent metal cation serves as cofactor.

It is found in the cytoplasm. The enzyme catalyses myo-inositol + UDP-alpha-D-galactose = alpha-D-galactosyl-(1-&gt;3)-1D-myo-inositol + UDP + H(+). Galactinol synthase involved in the biosynthesis of raffinose family oligosaccharides (RFOs) that function as osmoprotectants. May promote plant stress tolerance. The sequence is that of Galactinol synthase 10 (GOLS10) from Arabidopsis thaliana (Mouse-ear cress).